The sequence spans 705 residues: Dolichyl-diphosphooligosaccharide--protein glycosyltransferase subunit STT3A (705 aa).

The Cytoplasmic portion of the chain corresponds to 1–15; it reads MTKLGFLRLSYEKQD. The helical transmembrane segment at 16–34 threads the bilayer; the sequence is TLLKLLILSMAAVLSFSTR. Over 35-111 the chain is Lumenal; the sequence is LFAVLRFESV…VLHFFHITID (77 aa). The DXD motif 1 motif lies at 47 to 49; that stretch reads EFD. A Mn(2+)-binding site is contributed by D49. Residues 112 to 141 traverse the membrane as a helical segment; that stretch reads IRNVCVFLAPLFSSFTTIVTYHLTKELKDA. Residue G142 is a topological domain, cytoplasmic. A helical transmembrane segment spans residues 143 to 158; sequence AGLLAAAMIAVVPGYI. Residues 159-170 lie on the Lumenal side of the membrane; sequence SRSVAGSYDNEG. Residues D167 and E169 each coordinate Mn(2+). Residues 167–169 carry the DXD motif 2 motif; the sequence is DNE. The chain crosses the membrane as a helical span at residues 171–188; sequence IAIFCMLLTYYMWIKAVK. At 189-191 the chain is on the cytoplasmic side; that stretch reads TGS. Residues 192–207 form a helical membrane-spanning segment; that stretch reads IYWAAKCALAYFYMVS. Residues 208-210 lie on the Lumenal side of the membrane; sequence SWG. Residues 211–229 form a helical membrane-spanning segment; sequence GYVFLINLIPLHVLVLMLT. The Cytoplasmic portion of the chain corresponds to 230-234; it reads GRFSH. The helical transmembrane segment at 235 to 253 threads the bilayer; sequence RIYVAYCTVYCLGTILSMQ. The Lumenal portion of the chain corresponds to 254–265; it reads ISFVGFQPVLSS. Residues 266–283 form a helical membrane-spanning segment; it reads EHMAAFGVFGLCQIHAFV. Residues 284-298 lie on the Cytoplasmic side of the membrane; the sequence is DYLRSKLNPQQFEVL. Residues 299–317 form a helical membrane-spanning segment; sequence FRSVISLVGFVLLTVGALL. Residues 318–356 are Lumenal-facing; sequence MLTGKISPWTGRFYSLLDPSYAKNNIPIIASVSEHQPTT. Positions 348 to 351 match the SVSE motif motif; sequence SVSE. The helical transmembrane segment at 357–379 threads the bilayer; sequence WSSYYFDLQLLVFMFPVGLYYCF. At 380-385 the chain is on the cytoplasmic side; it reads SNLSDA. Residues 386–402 form a helical membrane-spanning segment; it reads RIFIIMYGVTSMYFSAV. Residues 403–406 lie on the Lumenal side of the membrane; the sequence is MVRL. R405 serves as a coordination point for dolichyl diphosphooligosaccharide. Residues 407–428 form a helical membrane-spanning segment; the sequence is MLVLAPVMCILSGIGVSQVLST. Over 429–453 the chain is Cytoplasmic; it reads YMKNLDISRPDKKSKKQQDSTYPIK. A helical transmembrane segment spans residues 454-473; that stretch reads NEVASGMILVMAFFLITYTF. The Lumenal segment spans residues 474–705; sequence HSTWVTSEAY…DLDNRGLSRT (232 aa). An interacts with target acceptor peptide in protein substrate region spans residues 525–527; sequence WWD. Positions 525–529 match the WWDYG motif motif; sequence WWDYG. A dolichyl diphosphooligosaccharide-binding site is contributed by Y530. N-linked (GlcNAc...) asparagine glycosylation is found at N537 and N544. The N-linked (GlcNAc...) (high mannose) asparagine glycan is linked to N548. A DK motif motif is present at residues 592–599; it reads DINKFLWM.

Belongs to the STT3 family. Component of the oligosaccharyltransferase (OST) complex. There are 2 OST complexes, OST-A and OST-B, which contain STT3A or STT3B as catalytic subunit, respectively. OST-A and OST-B contain common core subunits RPN1, RPN2, OST48, OST4, DAD1 and TMEM258, and OST-A contains DC2/OSTC and KRTCAP2/KCP2 specific accessory subunits. OST-A complex assembly occurs through the formation of 3 subcomplexes. Subcomplex 1 contains RPN1 and TMEM258, subcomplex 2 contains the OST-A-specific subunits STT3A, DC2/OSTC, and KCP2 as well as the core subunit OST4, and subcomplex 3 contains RPN2, DAD1, and OST48. The OST-A complex can form stable complexes with the Sec61 complex or with both the Sec61 and TRAP complexes. Requires Mg(2+) as cofactor. The cofactor is Mn(2+).

The protein localises to the endoplasmic reticulum membrane. The enzyme catalyses a di-trans,poly-cis-dolichyl diphosphooligosaccharide + L-asparaginyl-[protein] = N(4)-(oligosaccharide-(1-&gt;4)-N-acetyl-beta-D-glucosaminyl-(1-&gt;4)-N-acetyl-beta-D-glucosaminyl)-L-asparaginyl-[protein] + a di-trans,poly-cis-dolichyl diphosphate + H(+). It functions in the pathway protein modification; protein glycosylation. In terms of biological role, catalytic subunit of the oligosaccharyl transferase (OST) complex that catalyzes the initial transfer of a defined glycan (Glc(3)Man(9)GlcNAc(2) in eukaryotes) from the lipid carrier dolichol-pyrophosphate to an asparagine residue within an Asn-X-Ser/Thr consensus motif in nascent polypeptide chains, the first step in protein N-glycosylation. N-glycosylation occurs cotranslationally and the complex associates with the Sec61 complex at the channel-forming translocon complex that mediates protein translocation across the endoplasmic reticulum (ER). All subunits are required for a maximal enzyme activity. This subunit contains the active site and the acceptor peptide and donor lipid-linked oligosaccharide (LLO) binding pockets. STT3A is present in the majority of OST complexes and mediates cotranslational N-glycosylation of most sites on target proteins, while STT3B-containing complexes are required for efficient post-translational glycosylation and mediate glycosylation of sites that have been skipped by STT3A. STT3A-containing OST-A complex is also required to prevent hyperglycosylation of some target proteins by preventing glycosylation of facultative sites before folding of target proteins is completed. This Canis lupus familiaris (Dog) protein is Dolichyl-diphosphooligosaccharide--protein glycosyltransferase subunit STT3A.